Here is an 88-residue protein sequence, read N- to C-terminus: Small ribosomal subunit protein uS17 (88 aa).

This sequence belongs to the universal ribosomal protein uS17 family. Part of the 30S ribosomal subunit.

One of the primary rRNA binding proteins, it binds specifically to the 5'-end of 16S ribosomal RNA. The protein is Small ribosomal subunit protein uS17 of Nitratidesulfovibrio vulgaris (strain ATCC 29579 / DSM 644 / CCUG 34227 / NCIMB 8303 / VKM B-1760 / Hildenborough) (Desulfovibrio vulgaris).